The chain runs to 323 residues: COP9 signalosome complex subunit 6 (323 aa).

One can recognise an MPN domain in the interval 37-170 (VALHPLVILN…VSVFESVIDI (134 aa)).

The protein belongs to the peptidase M67A family. CSN6 subfamily. Component of the CSN complex, composed of COPS1/GPS1, COPS2, COPS3, COPS4, COPS5, COPS6, COPS7 (COPS7A or COPS7B), COPS8 and COPS9. In the complex, it probably interacts directly with COPS2, COPS4, COPS5, COPS7 (COPS7A or COPS7B) and COPS9. Interacts with the translation initiation factor EIF3S6. Interacts weakly with RBX1. Directly interacts with COP1 and 14-3-3 protein sigma/SFN. Interacts with ERCC6.

It is found in the cytoplasm. The protein localises to the nucleus. Its function is as follows. Component of the COP9 signalosome complex (CSN), a complex involved in various cellular and developmental processes. The CSN complex is an essential regulator of the ubiquitin (Ubl) conjugation pathway by mediating the deneddylation of the cullin subunits of SCF-type E3 ligase complexes, leading to decrease the Ubl ligase activity of SCF-type complexes such as SCF, CSA or DDB2. The complex is also involved in phosphorylation of p53/TP53, c-jun/JUN, IkappaBalpha/NFKBIA, ITPK1 and IRF8, possibly via its association with CK2 and PKD kinases. CSN-dependent phosphorylation of TP53 and JUN promotes and protects degradation by the Ubl system, respectively. Has some glucocorticoid receptor-responsive activity. Stabilizes COP1 through reducing COP1 auto-ubiquitination and decelerating COP1 turnover rate, hence regulates the ubiquitination of COP1 targets, including SFN. The chain is COP9 signalosome complex subunit 6 (COPS6) from Sus scrofa (Pig).